Consider the following 493-residue polypeptide: Probable cytosol aminopeptidase (493 aa).

Mn(2+) is bound by residues lysine 262 and aspartate 267. Lysine 274 is an active-site residue. Residues aspartate 286, aspartate 345, and glutamate 347 each coordinate Mn(2+). Arginine 349 is an active-site residue.

It belongs to the peptidase M17 family. It depends on Mn(2+) as a cofactor.

It is found in the cytoplasm. It catalyses the reaction Release of an N-terminal amino acid, Xaa-|-Yaa-, in which Xaa is preferably Leu, but may be other amino acids including Pro although not Arg or Lys, and Yaa may be Pro. Amino acid amides and methyl esters are also readily hydrolyzed, but rates on arylamides are exceedingly low.. The catalysed reaction is Release of an N-terminal amino acid, preferentially leucine, but not glutamic or aspartic acids.. In terms of biological role, presumably involved in the processing and regular turnover of intracellular proteins. Catalyzes the removal of unsubstituted N-terminal amino acids from various peptides. This is Probable cytosol aminopeptidase from Cyanothece sp. (strain PCC 7425 / ATCC 29141).